The chain runs to 118 residues: Large ribosomal subunit protein uL18 (118 aa).

Positions 1–25 (MISKPDKNKLRQKRHRRVRGKLSGT) are disordered. A compositionally biased stretch (basic residues) spans 10–20 (LRQKRHRRVRG).

Belongs to the universal ribosomal protein uL18 family. As to quaternary structure, part of the 50S ribosomal subunit; part of the 5S rRNA/L5/L18/L25 subcomplex. Contacts the 5S and 23S rRNAs.

In terms of biological role, this is one of the proteins that bind and probably mediate the attachment of the 5S RNA into the large ribosomal subunit, where it forms part of the central protuberance. In Streptococcus pneumoniae (strain Hungary19A-6), this protein is Large ribosomal subunit protein uL18.